The chain runs to 398 residues: MSSTNTTPKPGNPIVYLDLAFGSSPASRPGSNRIVLELYADRVPRTAENFRVLCTNTSKLASTGQPLSFRNSIFHRVIPKFMIQGGDFTRADGTGGESIYGEKFQDEDLTGKHDVPFLLSMANAGANTNGSQFFITTVPTPHLDGKHVVFGRVLKGKGVVRRVESVETVASDRPKEDVKIVDCGELTGDEVSNQTYGIEQDDTGDQYEDFPEDQDDKLESDVSATYHIGLALKNMANTQFSKANFDIALEKYSKALRYLQLHPILPEDTPADLAANYTTLKTSIQLNACLCALKTTPAQPRVAISNATAVISNLTSNKAPSTEQADKNKYHSDLAKAFYRRASAYVAQKDDERAEADLKHALENAPEDAGVKRELQALARRKEAKLKGMRAAYSKMFS.

The PPIase cyclophilin-type domain occupies 21-185 (FGSSPASRPG…EDVKIVDCGE (165 aa)). TPR repeat units lie at residues 229-262 (GLAL…LQLH), 282-323 (TSIQ…PSTE), and 335-368 (AKAF…APED).

The protein belongs to the cyclophilin-type PPIase family. PPIase D subfamily.

It localises to the cytoplasm. The catalysed reaction is [protein]-peptidylproline (omega=180) = [protein]-peptidylproline (omega=0). Its function is as follows. PPIases accelerate the folding of proteins. It catalyzes the cis-trans isomerization of proline imidic peptide bonds in oligopeptides. The sequence is that of Peptidyl-prolyl cis-trans isomerase D (CPR6) from Mycosarcoma maydis (Corn smut fungus).